The sequence spans 304 residues: MPVQQHGLLVLDKPSGPSSAQCISKVKRLGQKKIGHAGTLDPMAGGVLLVLLGHATKISGHLMADGEKVYAGTLRLGETTDTWDAEGTVTATAPWHHVTEADVRAIVDSWLGSSEQEVPPYSAAKHQGQPLYKLSRAGRETPVKTKTVEISLAEVVWCDLPHVRFRVRCSSGTYIRSLAHSLGIRLGCGAVLTELTREYSHPFGLDMAHTLDAVLAEPGRLAERVIPITHALPHWPKVGISLQQEASVRNGIPLPYQPEMVADMPFMEGVKAILLDTREVPVALVETAIVGGRQVWAVLRGLWS.

The active-site Nucleophile is Asp41.

Belongs to the pseudouridine synthase TruB family. Type 1 subfamily.

It catalyses the reaction uridine(55) in tRNA = pseudouridine(55) in tRNA. Its function is as follows. Responsible for synthesis of pseudouridine from uracil-55 in the psi GC loop of transfer RNAs. This chain is tRNA pseudouridine synthase B, found in Nitratidesulfovibrio vulgaris (strain ATCC 29579 / DSM 644 / CCUG 34227 / NCIMB 8303 / VKM B-1760 / Hildenborough) (Desulfovibrio vulgaris).